The following is a 257-amino-acid chain: 5'-nucleotidase SurE (257 aa).

A divalent metal cation-binding residues include Asp-8, Asp-9, Ser-40, and Asn-92.

This sequence belongs to the SurE nucleotidase family. A divalent metal cation serves as cofactor.

It localises to the cytoplasm. It catalyses the reaction a ribonucleoside 5'-phosphate + H2O = a ribonucleoside + phosphate. Its function is as follows. Nucleotidase that shows phosphatase activity on nucleoside 5'-monophosphates. This is 5'-nucleotidase SurE from Rhizobium etli (strain ATCC 51251 / DSM 11541 / JCM 21823 / NBRC 15573 / CFN 42).